The following is a 634-amino-acid chain: Probable potassium transport system protein Kup (634 aa).

12 helical membrane-spanning segments follow: residues 19-39, 62-82, 113-133, 150-170, 177-197, 225-245, 259-279, 291-311, 349-369, 379-399, 406-426, and 431-451; these read AIGLMVGAVGVCYGDIGTSPL, VLSLIFWSLVWVVSIKYVIFV, FVVVAGLIGAALFYGDSMITP, GLEHWTVPLALIVLIGLFLIQ, IGILFGPVMVLWFGALAALGV, IGVAILGATVLALTGAEALYA, WFLLVLPALVLNYFGQGATIL, LLAPGWALLPMVALSTLATVI, IYIGGVNWALMVGVVLLVLGF, YGVAVTGTMLITTLLMGVVIW, LWLGVPFFCVMLAVDSLFFAA, and VIQGGAFPVIAGIVIFILMST.

The protein belongs to the HAK/KUP transporter (TC 2.A.72) family.

It is found in the cell inner membrane. It carries out the reaction K(+)(in) + H(+)(in) = K(+)(out) + H(+)(out). Transport of potassium into the cell. Likely operates as a K(+):H(+) symporter. This chain is Probable potassium transport system protein Kup, found in Pseudomonas aeruginosa (strain LESB58).